The chain runs to 222 residues: Kinetochore protein Spc25 (222 aa).

Positions 51–86 form a coiled coil; it reads RHQRKVGKLQKVLMERREELDKRVSFIEELDRELEA.

Belongs to the SPC25 family. In terms of assembly, component of the Ndc80 complex, which is composed of Ndc80, Nuf2 and Spc25.

Its subcellular location is the nucleus. It localises to the chromosome. The protein resides in the centromere. It is found in the kinetochore. Acts as a component of the essential kinetochore-associated Ndc80 complex, which is required for chromosome segregation and spindle checkpoint activity during meiosis and mitosis. Required for kinetochore integrity and the organization of stable microtubule binding sites in the outer plate of the kinetochore. Participates in SAC signaling that responds specifically to disruptions in spindle microtubule dynamics. The NDC80 complex synergistically enhances the affinity of the SKA1 complex for microtubules and may allow the NDC80 complex to track depolymerizing microtubules. The chain is Kinetochore protein Spc25 from Drosophila melanogaster (Fruit fly).